The sequence spans 119 residues: Beta-2-microglobulin (119 aa).

Positions 1-20 are cleaved as a signal peptide; the sequence is MVCSVVVALLALLSLSGLEA. An Ig-like C1-type domain is found at 25 to 114; it reads PKIQVYSRHP…VTFSTPKTVK (90 aa). A disulfide bond links C45 and C100.

The protein belongs to the beta-2-microglobulin family. As to quaternary structure, heterodimer of an alpha chain and a beta chain. Beta-2-microglobulin is the beta-chain of major histocompatibility complex class I molecules.

It is found in the secreted. Its function is as follows. Component of the class I major histocompatibility complex (MHC). Involved in the presentation of peptide antigens to the immune system. This chain is Beta-2-microglobulin (B2M), found in Cebuella pygmaea (Pygmy marmoset).